We begin with the raw amino-acid sequence, 1343 residues long: DNA-directed RNA polymerase subunit beta (1343 aa).

The protein belongs to the RNA polymerase beta chain family. In terms of assembly, the RNAP catalytic core consists of 2 alpha, 1 beta, 1 beta' and 1 omega subunit. When a sigma factor is associated with the core the holoenzyme is formed, which can initiate transcription.

It carries out the reaction RNA(n) + a ribonucleoside 5'-triphosphate = RNA(n+1) + diphosphate. Functionally, DNA-dependent RNA polymerase catalyzes the transcription of DNA into RNA using the four ribonucleoside triphosphates as substrates. The protein is DNA-directed RNA polymerase subunit beta of Shewanella loihica (strain ATCC BAA-1088 / PV-4).